Reading from the N-terminus, the 182-residue chain is CDP-diacylglycerol--glycerol-3-phosphate 3-phosphatidyltransferase (182 aa).

Residues 1 to 12 (MQLNIPTWLTLF) are Cytoplasmic-facing. A helical transmembrane segment spans residues 13–37 (RVVLIPFFVLAFYLPFVWAPMVCAI). The Periplasmic portion of the chain corresponds to 38–60 (IFVFAAATDWFDGFLARRWKQTT). The helical transmembrane segment at 61–81 (RFGAFLDPVADKVMVAVALVL) threads the bilayer. Topologically, residues 82–86 (VAEHY) are cytoplasmic. The chain crosses the membrane as a helical span at residues 87–107 (HSWWITLPAATMIAREIIISS). Topologically, residues 108–145 (LREWMAEIGKRSSVAVSWVGKVKTMAQMGSLVGLLWRP) are periplasmic. Residues 146-168 (DHNVELASFVLLYIAAVLTFWSM) traverse the membrane as a helical segment. Residues 169–181 (FQYLNAAWSDLLE) are Cytoplasmic-facing.

Belongs to the CDP-alcohol phosphatidyltransferase class-I family.

It localises to the cell inner membrane. The enzyme catalyses a CDP-1,2-diacyl-sn-glycerol + sn-glycerol 3-phosphate = a 1,2-diacyl-sn-glycero-3-phospho-(1'-sn-glycero-3'-phosphate) + CMP + H(+). The protein operates within phospholipid metabolism; phosphatidylglycerol biosynthesis; phosphatidylglycerol from CDP-diacylglycerol: step 1/2. Catalyzes the conversion of cytidine diphosphate diacylglycerol (CDP-DG) and glycerol 3-phosphate into phosphatidylglycerol. Essential for the synthesis of anionic phospholipids, thereby playing a role in balancing the ratio of zwitterionic and anionic phospholipids, which is thought to be important for normal membrane function. The chain is CDP-diacylglycerol--glycerol-3-phosphate 3-phosphatidyltransferase from Yersinia pestis bv. Antiqua (strain Antiqua).